The sequence spans 305 residues: E3 ubiquitin-protein ligase RNF115 (305 aa).

An N-acetylalanine modification is found at Ala-2. Residues 100–110 (NRANERGHQTH) show a composition bias toward basic and acidic residues. The tract at residues 100–139 (NRANERGHQTHTDFWGPSRPPRLPMTRRYRSRGSTRPDRS) is disordered. At Ser-133 the chain carries Phosphoserine. Residues 229-270 (CPVCKEDYTVEEKVRQLPCNHFFHSSCIVPWLELHDTCPVCR) form an RING-type zinc finger. The segment at 274 to 305 (NGEDSTRQTQSSEASASNRFSNDSQLHDRWTF) is disordered. Positions 280–297 (RQTQSSEASASNRFSNDS) are enriched in polar residues.

Interacts with RAB7A. Interacts with EGFR and FLT3. Interacts with BST2. Interacts with STX17. Interacts with YWHAE. In terms of processing, phosphorylated by AKT1, allowing association with the 14-3-3 chaperones that facilitates associating with TLRs. Post-translationally, deubiquitinated by USP9X; antogonizing its autoubiquitination and subsequent proteasomal degradation. RING-type zinc finger-dependent and E2-dependent autoubiquitination.

The protein localises to the cytoplasm. The protein resides in the cytoplasmic vesicle. It is found in the phagosome. It localises to the nucleus. Its subcellular location is the endoplasmic reticulum. The protein localises to the golgi apparatus. The catalysed reaction is S-ubiquitinyl-[E2 ubiquitin-conjugating enzyme]-L-cysteine + [acceptor protein]-L-lysine = [E2 ubiquitin-conjugating enzyme]-L-cysteine + N(6)-ubiquitinyl-[acceptor protein]-L-lysine.. Its pathway is protein modification; protein ubiquitination. E3 ubiquitin-protein ligase that catalyzes the 'Lys-48'- and/or 'Lys-63'-linked polyubiquitination of various substrates and thereby plays a role in a number of signaling pathways including autophagy, innate immunity, cell proliferation and cell death. Plays a role in the endosomal trafficking and degradation of membrane receptors including EGFR, FLT3, MET and CXCR4 through their polyubiquitination. Participates together with BST2 in antiviral immunity by facilitating the internalization of HIV-1 virions into intracellular vesicles leading to their lysosomal degradation. Also possesses an antiviral activity independently of BST2 by promoting retroviral GAG proteins ubiquitination, redistribution to endo-lysosomal compartments and, ultimately, lysosomal degradation. Catalyzes distinct types of ubiquitination on MAVS and STING1 at different phases of viral infection to promote innate antiviral response. Mediates the 'Lys-48'-linked ubiquitination of MAVS leading to its proteasomal degradation and ubiquitinates STING1 via 'Lys-63'-linked polyubiquitination, critical for its oligomerization and the subsequent recruitment of TBK1. Plays a positive role in the autophagosome-lysosome fusion by interacting with STX17 and enhancing its stability without affecting 'Lys-48'- or 'Lys-63'-linked polyubiquitination levels, which in turn promotes autophagosome maturation. Negatively regulates TLR-induced expression of proinflammatory cytokines by catalyzing 'Lys-11'-linked ubiquitination of RAB1A and RAB13 to inhibit post-ER trafficking of TLRs to the Golgi by RAB1A and subsequently from the Golgi apparatus to the cell surface by RAB13. This is E3 ubiquitin-protein ligase RNF115 from Mus musculus (Mouse).